The primary structure comprises 192 residues: UPF0301 protein Jann_3896 (192 aa).

Belongs to the UPF0301 (AlgH) family.

The sequence is that of UPF0301 protein Jann_3896 from Jannaschia sp. (strain CCS1).